Consider the following 62-residue polypeptide: uncharacterized protein (62 aa).

This is an uncharacterized protein from Acidianus filamentous virus 2 (isolate Italy/Pozzuoli) (AFV-2).